The sequence spans 322 residues: tRNA-modifying protein YgfZ (322 aa).

A folate-binding site is contributed by Trp-182.

Belongs to the tRNA-modifying YgfZ family.

It localises to the cytoplasm. Folate-binding protein involved in regulating the level of ATP-DnaA and in the modification of some tRNAs. It is probably a key factor in regulatory networks that act via tRNA modification, such as initiation of chromosomal replication. The polypeptide is tRNA-modifying protein YgfZ (Vibrio parahaemolyticus serotype O3:K6 (strain RIMD 2210633)).